Here is a 212-residue protein sequence, read N- to C-terminus: Large ribosomal subunit protein uL3 (212 aa).

Glutamine 153 carries the post-translational modification N5-methylglutamine.

It belongs to the universal ribosomal protein uL3 family. In terms of assembly, part of the 50S ribosomal subunit. Forms a cluster with proteins L14 and L19. In terms of processing, methylated by PrmB.

One of the primary rRNA binding proteins, it binds directly near the 3'-end of the 23S rRNA, where it nucleates assembly of the 50S subunit. This is Large ribosomal subunit protein uL3 from Marinobacter nauticus (strain ATCC 700491 / DSM 11845 / VT8) (Marinobacter aquaeolei).